A 903-amino-acid chain; its full sequence is Valine--tRNA ligase (903 aa).

Over residues M1–N15 the composition is skewed to polar residues. Residues M1 to P21 are disordered. The 'HIGH' region signature appears at P61–H71. Residues K552–S556 carry the 'KMSKS' region motif. K555 is a binding site for ATP. Residues T836–A903 adopt a coiled-coil conformation.

This sequence belongs to the class-I aminoacyl-tRNA synthetase family. ValS type 1 subfamily. Monomer.

It is found in the cytoplasm. It catalyses the reaction tRNA(Val) + L-valine + ATP = L-valyl-tRNA(Val) + AMP + diphosphate. Its function is as follows. Catalyzes the attachment of valine to tRNA(Val). As ValRS can inadvertently accommodate and process structurally similar amino acids such as threonine, to avoid such errors, it has a 'posttransfer' editing activity that hydrolyzes mischarged Thr-tRNA(Val) in a tRNA-dependent manner. The sequence is that of Valine--tRNA ligase from Corynebacterium glutamicum (strain ATCC 13032 / DSM 20300 / JCM 1318 / BCRC 11384 / CCUG 27702 / LMG 3730 / NBRC 12168 / NCIMB 10025 / NRRL B-2784 / 534).